Here is a 104-residue protein sequence, read N- to C-terminus: Large ribosomal subunit protein uL24 (104 aa).

It belongs to the universal ribosomal protein uL24 family. As to quaternary structure, part of the 50S ribosomal subunit.

One of two assembly initiator proteins, it binds directly to the 5'-end of the 23S rRNA, where it nucleates assembly of the 50S subunit. Its function is as follows. One of the proteins that surrounds the polypeptide exit tunnel on the outside of the subunit. The polypeptide is Large ribosomal subunit protein uL24 (Buchnera aphidicola subsp. Schizaphis graminum (strain Sg)).